Here is a 713-residue protein sequence, read N- to C-terminus: Phospholipase A1 PLIP2, chloroplastic (713 aa).

Residues 1 to 32 (MDSLCLNSGLHGVIPAITAVGNGGCGGVVEVR) constitute a chloroplast transit peptide. Disordered stretches follow at residues 118-140 (WKHE…DEEV) and 232-261 (ALKA…EKNK). The segment covering 122 to 140 (EEEDDDEVEDEDGDEDEEV) has biased composition (acidic residues). Positions 426–430 (GHSLG) match the GXSXG motif. The active-site Acyl-ester intermediate is Ser428. Residues Asp489 and His608 each act as charge relay system in the active site.

It belongs to the AB hydrolase superfamily. Lipase family.

Its subcellular location is the plastid. It is found in the chloroplast membrane. It localises to the chloroplast stroma. The enzyme catalyses a 1,2-diacyl-3-O-(beta-D-galactosyl)-sn-glycerol + 2 H2O = 3-beta-D-galactosyl-sn-glycerol + 2 a fatty acid + 2 H(+). It carries out the reaction a 1,2-diacyl-sn-glycero-3-phosphocholine + H2O = a 2-acyl-sn-glycero-3-phosphocholine + a fatty acid + H(+). It catalyses the reaction 1-hexadecanoyl-2-(9Z-octadecenoyl)-sn-glycero-3-phosphocholine + H2O = 2-(9Z-octadecenoyl)-sn-glycero-3-phosphocholine + hexadecanoate + H(+). The catalysed reaction is 1,2-di-(9Z-octadecenoyl)-sn-glycero-3-phosphocholine + H2O = 2-(9Z-octadecenoyl)-sn-glycero-3-phosphocholine + (9Z)-octadecenoate + H(+). The enzyme catalyses 1-octadecanoyl-2-(9Z-octadecenoyl)-sn-glycero-3-phosphocholine + H2O = 2-(9Z-octadecenoyl)-sn-glycero-3-phosphocholine + octadecanoate + H(+). It carries out the reaction 1-octadecanoyl-2-(9Z,12Z)-octadecadienoyl-sn-glycero-3-phosphocholine + H2O = 2-(9Z,12Z-octadecadienoyl)-sn-glycero-3-phosphocholine + octadecanoate + H(+). It catalyses the reaction 1,2-di-(9Z,12Z-octadecadienoyl)-sn-glycero-3-phosphocholine + H2O = 2-(9Z,12Z-octadecadienoyl)-sn-glycero-3-phosphocholine + (9Z,12Z)-octadecadienoate + H(+). The catalysed reaction is 1-(9Z-octadecenoyl)-2-hexadecanoyl-sn-glycero-3-phosphocholine + H2O = 2-hexadecanoyl-sn-glycero-3-phosphocholine + (9Z)-octadecenoate + H(+). Its function is as follows. Sn-1-specific phospholipase A1 that catalyzes the initial step of oxylipins and jasmonate (JA) biosynthesis. Hydrolyzes polyunsaturated acyl groups preferentially from chloroplastic monogalactosyldiacylglycerol (MGDG). May function downstream of abscisic acid (ABA) and provide a link between ABA-mediated abiotic stress responses and oxylipin and JA signalings. In vitro, possesses broad substrate specificity. Can hydrolyze the galactolipids monogalactosyldiacylglycerol (MGDG) and digalactosyldiacylglycerol (DGDG), the sulfolipid sulfoquinovosyldiacylglycerol (SQDG), and the phoshpolipids phosphatidylcholine (PC), and phosphatidylglycerol (PG). The protein is Phospholipase A1 PLIP2, chloroplastic of Arabidopsis thaliana (Mouse-ear cress).